Here is a 706-residue protein sequence, read N- to C-terminus: MTALWVIVLCGALSIVYAIWATSSVLAADQGNARMQEIAGAVREGAQAYLKRQYMTIAIVGVVIFALLAYFLGILVAIGFAIGAILSGAAGFIGMNVSVRANVRTAQAATTSLAGGLELAFKAGAITGLLVAGLALLGVTLYFIYLIHFAGLQANSRTVVDALVALGFGASLISIFARLGGGIFTKGADVGGDLVGKVEAGIPEDDPRNPATIADNVGDNVGDCAGMAADLFETYAVTAVATMVLAAIFFGSATPDQLQSVMTLPLAIGGICILTSIAGTFFVKLGASQSIMGALYKGLIATGVLSLVGVGVVIHQLIGFGPLPGVSYTGLALFECGIVGLAVTGLIIWITEYYTGTDFRPVKSIAQASVTGHGTNVIQGLAISMESTALPAIVIIAGILITYSLAGLFGIAIATTTMLALAGMIVALDAFGPVTDNAGGIAEMAGLPKEVRKSTDALDAVGNTTKAVTKGYAIGSAGLGALVLFAAYNEDLKFFIAQKSPYFVGVAPDFSLNNPYVVVGLLFGGLLPYLFGAMGMTAVGRAAGAIVEEVRRQFREKPGIMKGTDKPDYGKAVDLLTKAAIKEMIIPSLLPVLSPIFVYFAIYAIAGGGAAGKSAAFSAVGAMLLGVIVTGLFVAISMTSGGGAWDNAKKYIEDGHHGGKGSDAHKAAVTGDTVGDPYKDTAGPAVNPMIKITNIVALLLLAILAH.

Helical transmembrane passes span 1 to 21 (MTAL…AIWA), 62 to 82 (VVIF…GFAI), 83 to 103 (GAIL…RANV), 129 to 149 (LLVA…LIHF), and 164 to 184 (VALG…GGIF). Position 186 (K186) interacts with substrate. Residues D189, D193, N216, and D219 each contribute to the Mg(2+) site. 6 consecutive transmembrane segments (helical) span residues 231–251 (LFET…IFFG), 263–283 (TLPL…TFFV), 300–320 (IATG…LIGF), 330–350 (GLAL…IIWI), 393–413 (IVII…GIAI), and 414–434 (ATTT…FGPV). D436 is a binding site for Mg(2+). 4 helical membrane-spanning segments follow: residues 467–487 (AVTK…LFAA), 516–536 (YVVV…AMGM), 585–605 (IIPS…IYAI), and 616–636 (AFSA…FVAI). Ca(2+) contacts are provided by D646, D672, and D676. K679 lines the substrate pocket. Residues 685–705 (AVNPMIKITNIVALLLLAILA) traverse the membrane as a helical segment.

Belongs to the H(+)-translocating pyrophosphatase (TC 3.A.10) family. K(+)-insensitive subfamily. In terms of assembly, homodimer. Requires Mg(2+) as cofactor.

The protein localises to the cell inner membrane. It catalyses the reaction diphosphate + H2O + H(+)(in) = 2 phosphate + 2 H(+)(out). Functionally, proton pump that utilizes the energy of pyrophosphate hydrolysis as the driving force for proton movement across the membrane. Generates a proton motive force. This chain is K(+)-insensitive pyrophosphate-energized proton pump, found in Rhodopseudomonas palustris (strain ATCC BAA-98 / CGA009).